Here is a 204-residue protein sequence, read N- to C-terminus: Transcriptional regulator GfcR 1 (204 aa).

The protein belongs to the purine/pyrimidine phosphoribosyltransferase family. GfcR subfamily.

The polypeptide is Transcriptional regulator GfcR 1 (Methanosarcina barkeri (strain Fusaro / DSM 804)).